The primary structure comprises 71 residues: Large ribosomal subunit protein bL31 (71 aa).

Residues cysteine 16, cysteine 18, cysteine 37, and cysteine 40 each contribute to the Zn(2+) site.

This sequence belongs to the bacterial ribosomal protein bL31 family. Type A subfamily. Part of the 50S ribosomal subunit. The cofactor is Zn(2+).

Binds the 23S rRNA. The polypeptide is Large ribosomal subunit protein bL31 (Nitratidesulfovibrio vulgaris (strain DSM 19637 / Miyazaki F) (Desulfovibrio vulgaris)).